We begin with the raw amino-acid sequence, 180 residues long: Large ribosomal subunit protein uL6 (180 aa).

The protein belongs to the universal ribosomal protein uL6 family. As to quaternary structure, part of the 50S ribosomal subunit.

This protein binds to the 23S rRNA, and is important in its secondary structure. It is located near the subunit interface in the base of the L7/L12 stalk, and near the tRNA binding site of the peptidyltransferase center. The protein is Large ribosomal subunit protein uL6 of Clostridium botulinum (strain 657 / Type Ba4).